A 360-amino-acid chain; its full sequence is E3 ubiquitin-protein ligase RNF146 (360 aa).

Residues 37 to 75 form an RING-type zinc finger; it reads CAICLQTCVHPVSLPCKHVFCYLCVKGASWLGKRCALCR. Glycyl lysine isopeptide (Lys-Gly) (interchain with G-Cter in ubiquitin) cross-links involve residues lysine 85 and lysine 95. Residues 92–168 enclose the WWE domain; sequence EELKAASRGN…EHGRRRKIKR (77 aa). Residues tyrosine 108, arginine 111, and tryptophan 115 each coordinate a glycoprotein. A Glycyl lysine isopeptide (Lys-Gly) (interchain with G-Cter in ubiquitin) cross-link involves residue lysine 131. Residues tyrosine 145, glutamine 154, arginine 164, and lysine 176 each contribute to the a glycoprotein site. A Glycyl lysine isopeptide (Lys-Gly) (interchain with G-Cter in ubiquitin) cross-link involves residue lysine 176. Residues 259 to 360 are disordered; it reads ERSHRGEGEE…PDGQCTVTEV (102 aa). Residues 284–294 show a composition bias toward acidic residues; the sequence is SIEETESDASS. Residues serine 290 and serine 294 each carry the phosphoserine modification. Low complexity predominate over residues 295–305; sequence DSENVSSAVVA. Positions 307–333 are enriched in polar residues; sequence HSLTQQRLLVSNANQTVSDRSDQSGTD.

In terms of assembly, can form homooligomers. Interacts with PARsylated AXIN1, AXIN2, BLZF1, CASC3, H1-2, IPO7, LIG3, NCL, PARP1, XRCC1, XRCC5 and XRCC6. Interacts with DDB1, DHX15, IQGAP1, LRPPRC, PARP2, PRKDC, RUVBL2, TNKS1 and TNKS2. Binding often leads to interactor ubiquitination, in the presence of the appropriate E1 and E2 enzymes, and proteasomal degradation. Ubiquitinated; autoubiquitinated. Autoubiquitination is enhanced upon poly(ADP-ribose)-binding.

The protein resides in the cytoplasm. It is found in the cytosol. The protein localises to the nucleus. It catalyses the reaction S-ubiquitinyl-[E2 ubiquitin-conjugating enzyme]-L-cysteine + [acceptor protein]-L-lysine = [E2 ubiquitin-conjugating enzyme]-L-cysteine + N(6)-ubiquitinyl-[acceptor protein]-L-lysine.. The protein operates within protein modification; protein ubiquitination. In terms of biological role, E3 ubiquitin-protein ligase that specifically binds poly-ADP-ribosylated (PARsylated) proteins and mediates their ubiquitination and subsequent degradation. May regulate many important biological processes, such as cell survival and DNA damage response. Acts as an activator of the Wnt signaling pathway by mediating the ubiquitination of PARsylated AXIN1 and AXIN2, 2 key components of the beta-catenin destruction complex. Acts in cooperation with tankyrase proteins (TNKS and TNKS2), which mediate PARsylation of target proteins AXIN1, AXIN2, BLZF1, CASC3, TNKS and TNKS2. Recognizes and binds tankyrase-dependent PARsylated proteins via its WWE domain and mediates their ubiquitination, leading to their degradation. Different ubiquitin linkage types have been observed: TNKS2 undergoes ubiquitination at 'Lys-48' and 'Lys-63', while AXIN1 is only ubiquitinated at 'Lys-48'. May regulate TNKS and TNKS2 subcellular location, preventing aggregation at a centrosomal location. Neuroprotective protein. Protects the brain against N-methyl-D-aspartate (NMDA) receptor-mediated glutamate excitotoxicity and ischemia, by interfering with PAR-induced cell death, called parthanatos. Prevents nuclear translocation of AIFM1 in a PAR-binding dependent manner. Does not affect PARP1 activation. Protects against cell death induced by DNA damaging agents, such as N-methyl-N-nitro-N-nitrosoguanidine (MNNG) and rescues cells from G1 arrest. Promotes cell survival after gamma-irradiation. Facilitates DNA repair. This is E3 ubiquitin-protein ligase RNF146 (RNF146) from Macaca fascicularis (Crab-eating macaque).